The primary structure comprises 146 residues: Neutral phospholipase A2 B (146 aa).

The signal sequence occupies residues 1-21 (MNPAHLLILAAVCVSPLGASS). Residues 22 to 27 (NRPMPL) constitute a propeptide that is removed on maturation. Cystine bridges form between Cys-38–Cys-98, Cys-53–Cys-145, Cys-55–Cys-71, Cys-70–Cys-126, Cys-77–Cys-119, Cys-87–Cys-112, and Cys-105–Cys-117. Tyr-54, Gly-56, and Gly-58 together coordinate Ca(2+). Residue His-74 is part of the active site. Asp-75 contacts Ca(2+). Asp-120 is a catalytic residue.

It belongs to the phospholipase A2 family. Group I subfamily. D49 sub-subfamily. Ca(2+) is required as a cofactor. Expressed by the venom gland.

Its subcellular location is the secreted. The catalysed reaction is a 1,2-diacyl-sn-glycero-3-phosphocholine + H2O = a 1-acyl-sn-glycero-3-phosphocholine + a fatty acid + H(+). Functionally, PLA2 catalyzes the calcium-dependent hydrolysis of the 2-acyl groups in 3-sn-phosphoglycerides. This Naja sputatrix (Malayan spitting cobra) protein is Neutral phospholipase A2 B.